The primary structure comprises 590 residues: Glutamine--fructose-6-phosphate aminotransferase [isomerizing] (590 aa).

Cys2 (nucleophile; for GATase activity) is an active-site residue. Residues 2–221 form the Glutamine amidotransferase type-2 domain; sequence CGIIGIVSSK…DGELGFITTS (220 aa). 2 consecutive SIS domains span residues 286-422 and 445-580; these read IIAE…DNTN and IGEE…PDKP. The active-site For Fru-6P isomerization activity is Lys585.

As to quaternary structure, homodimer.

It localises to the cytoplasm. The enzyme catalyses D-fructose 6-phosphate + L-glutamine = D-glucosamine 6-phosphate + L-glutamate. Functionally, catalyzes the first step in hexosamine metabolism, converting fructose-6P into glucosamine-6P using glutamine as a nitrogen source. The polypeptide is Glutamine--fructose-6-phosphate aminotransferase [isomerizing] (Sulfolobus acidocaldarius (strain ATCC 33909 / DSM 639 / JCM 8929 / NBRC 15157 / NCIMB 11770)).